The sequence spans 168 residues: MNTLQGPVSFKDVAVDFTQEEWRQLDPDEKIAYGDVMLENYSHLVSVGYDYHQAKHHHGVEVKEVEQGEEPWIMEGEFPCQHSPEPAKAIKPIDRKSVHQICSGPVVLSLSTAVKELVENSLDAGATNIDLKLKDYGVDLIEVSDNGCGVEEENFEGLISFSSETSHM.

The KRAB domain occupies 8-84 (VSFKDVAVDF…EGEFPCQHSP (77 aa)).

Belongs to the DNA mismatch repair MutL/HexB family.

The chain is Putative postmeiotic segregation increased 2-like protein 3 (PMS2P3) from Homo sapiens (Human).